A 216-amino-acid chain; its full sequence is uncharacterized protein (216 aa).

An HTH cro/C1-type domain is found at 8 to 63 (LKTLMTSVHINASELARRTGIAQPIIHRLSTGQNTNPKLATIKPIARYFMVNISQL). The H-T-H motif DNA-binding region spans 19-38 (ASELARRTGIAQPIIHRLST).

This is an uncharacterized protein from Coxiella burnetii (strain RSA 493 / Nine Mile phase I).